The sequence spans 519 residues: Methionine--tRNA ligase (519 aa).

The 'HIGH' region signature appears at 11–21 (AYPNAAPHVGH). The short motif at 299 to 303 (KMSKS) is the 'KMSKS' region element. Lys-302 is a binding site for ATP. Positions 500-519 (LPPPTGVFPRYQPPQPPEGK) are disordered.

This sequence belongs to the class-I aminoacyl-tRNA synthetase family. MetG type 2B subfamily. In terms of assembly, monomer.

It is found in the cytoplasm. The catalysed reaction is tRNA(Met) + L-methionine + ATP = L-methionyl-tRNA(Met) + AMP + diphosphate. Is required not only for elongation of protein synthesis but also for the initiation of all mRNA translation through initiator tRNA(fMet) aminoacylation. In Mycobacterium tuberculosis (strain ATCC 25618 / H37Rv), this protein is Methionine--tRNA ligase.